We begin with the raw amino-acid sequence, 492 residues long: Pre-mRNA-processing factor 19 (492 aa).

One can recognise a U-box domain in the interval 1 to 72 (MSFVCGISGE…APRNVSGTSI (72 aa)). 6 WD repeats span residues 207 to 246 (HSTGTPGITALDIKGNLSLTGGIDKTVVLYDYEKEQVMQT), 249 to 288 (GHNKKINAVVLHPDNITAISASADSHIRVWSATDSSSKAI), 291 to 330 (VHQAPVTDISLNASGDYILSASDDSYWAFSDIRSGKSLCK), 336 to 375 (GSQIAVHSIEFHPDGLIFGTGAADAVVKIWDLKNQTVAAA), 378 to 417 (GHTAAVRSIAFSENGYYLATGSEDGEVKLWDLRKLKNLKT), and 461 to 491 (DHSGPVTGVRFGENARSLVTCSLDKSLRVFS).

This sequence belongs to the WD repeat PRP19 family. Homotetramer. Component of the NTC complex (or PRP19-associated complex) which is associated with the spliceosome.

It localises to the nucleus. The protein resides in the nucleoplasm. The enzyme catalyses S-ubiquitinyl-[E2 ubiquitin-conjugating enzyme]-L-cysteine + [acceptor protein]-L-lysine = [E2 ubiquitin-conjugating enzyme]-L-cysteine + N(6)-ubiquitinyl-[acceptor protein]-L-lysine.. The protein operates within protein modification; protein ubiquitination. Its function is as follows. Probable ubiquitin-protein ligase which is mainly involved pre-mRNA splicing and DNA repair. Core component of the NTC/Nineteen complex which is part of the spliceosome and participates in its assembly, its remodeling and is required for its activity. Together with emb-4, necessary for interaction of rnp-4, a probable exon junction complex component, with mRNAs and spliceosomal snRNAs. Plays a role in nuclear retention of unspliced mRNAs. The protein is Pre-mRNA-processing factor 19 (prp-19) of Caenorhabditis elegans.